The following is a 215-amino-acid chain: Probable nicotinate-nucleotide adenylyltransferase (215 aa).

It belongs to the NadD family.

The enzyme catalyses nicotinate beta-D-ribonucleotide + ATP + H(+) = deamido-NAD(+) + diphosphate. It participates in cofactor biosynthesis; NAD(+) biosynthesis; deamido-NAD(+) from nicotinate D-ribonucleotide: step 1/1. In terms of biological role, catalyzes the reversible adenylation of nicotinate mononucleotide (NaMN) to nicotinic acid adenine dinucleotide (NaAD). The chain is Probable nicotinate-nucleotide adenylyltransferase from Shewanella sp. (strain W3-18-1).